A 335-amino-acid polypeptide reads, in one-letter code: Anthranilate phosphoribosyltransferase (335 aa).

Residues glycine 79, 82-83, serine 87, 89-92, 107-115, and serine 119 each bind 5-phospho-alpha-D-ribose 1-diphosphate; these read GD, NIST, and KHGNRSISS. Residue glycine 79 participates in anthranilate binding. Residue serine 91 participates in Mg(2+) binding. Asparagine 110 is a binding site for anthranilate. Arginine 165 provides a ligand contact to anthranilate. Mg(2+) is bound by residues aspartate 224 and glutamate 225.

The protein belongs to the anthranilate phosphoribosyltransferase family. As to quaternary structure, homodimer. Requires Mg(2+) as cofactor.

The catalysed reaction is N-(5-phospho-beta-D-ribosyl)anthranilate + diphosphate = 5-phospho-alpha-D-ribose 1-diphosphate + anthranilate. It functions in the pathway amino-acid biosynthesis; L-tryptophan biosynthesis; L-tryptophan from chorismate: step 2/5. Its function is as follows. Catalyzes the transfer of the phosphoribosyl group of 5-phosphorylribose-1-pyrophosphate (PRPP) to anthranilate to yield N-(5'-phosphoribosyl)-anthranilate (PRA). The polypeptide is Anthranilate phosphoribosyltransferase (Streptococcus mutans serotype c (strain ATCC 700610 / UA159)).